A 290-amino-acid polypeptide reads, in one-letter code: Porphobilinogen deaminase (290 aa).

The residue at position 237 (Cys237) is an S-(dipyrrolylmethanemethyl)cysteine.

This sequence belongs to the HMBS family. As to quaternary structure, monomer. Dipyrromethane serves as cofactor.

The enzyme catalyses 4 porphobilinogen + H2O = hydroxymethylbilane + 4 NH4(+). The protein operates within porphyrin-containing compound metabolism; protoporphyrin-IX biosynthesis; coproporphyrinogen-III from 5-aminolevulinate: step 2/4. Functionally, tetrapolymerization of the monopyrrole PBG into the hydroxymethylbilane pre-uroporphyrinogen in several discrete steps. This Clostridium botulinum (strain Kyoto / Type A2) protein is Porphobilinogen deaminase.